We begin with the raw amino-acid sequence, 165 residues long: 6,7-dimethyl-8-ribityllumazine synthase (165 aa).

5-amino-6-(D-ribitylamino)uracil contacts are provided by residues W26, 57-59 (SVE), and 79-81 (VVV). 84–85 (AT) is a binding site for (2S)-2-hydroxy-3-oxobutyl phosphate. Residue H87 is the Proton donor of the active site. H112 contributes to the 5-amino-6-(D-ribitylamino)uracil binding site. Position 126 (R126) interacts with (2S)-2-hydroxy-3-oxobutyl phosphate.

The protein belongs to the DMRL synthase family.

The enzyme catalyses (2S)-2-hydroxy-3-oxobutyl phosphate + 5-amino-6-(D-ribitylamino)uracil = 6,7-dimethyl-8-(1-D-ribityl)lumazine + phosphate + 2 H2O + H(+). Its pathway is cofactor biosynthesis; riboflavin biosynthesis; riboflavin from 2-hydroxy-3-oxobutyl phosphate and 5-amino-6-(D-ribitylamino)uracil: step 1/2. Catalyzes the formation of 6,7-dimethyl-8-ribityllumazine by condensation of 5-amino-6-(D-ribitylamino)uracil with 3,4-dihydroxy-2-butanone 4-phosphate. This is the penultimate step in the biosynthesis of riboflavin. This chain is 6,7-dimethyl-8-ribityllumazine synthase, found in Salinispora arenicola (strain CNS-205).